Here is a 211-residue protein sequence, read N- to C-terminus: tRNA (guanine-N(7)-)-methyltransferase (211 aa).

S-adenosyl-L-methionine-binding residues include Glu44, Asp69, Asp96, and Asp118. Asp118 is an active-site residue. Residue Lys122 participates in substrate binding. Positions 124–129 (KHEKRR) are interaction with RNA. Substrate-binding positions include Asp154 and 191-194 (TEYE).

Belongs to the class I-like SAM-binding methyltransferase superfamily. TrmB family.

The enzyme catalyses guanosine(46) in tRNA + S-adenosyl-L-methionine = N(7)-methylguanosine(46) in tRNA + S-adenosyl-L-homocysteine. The protein operates within tRNA modification; N(7)-methylguanine-tRNA biosynthesis. Functionally, catalyzes the formation of N(7)-methylguanine at position 46 (m7G46) in tRNA. The polypeptide is tRNA (guanine-N(7)-)-methyltransferase (Streptococcus pyogenes serotype M6 (strain ATCC BAA-946 / MGAS10394)).